The sequence spans 212 residues: Fe/S biogenesis protein NfuA (212 aa).

[4Fe-4S] cluster is bound by residues C169 and C172.

This sequence belongs to the NfuA family. In terms of assembly, homodimer. The cofactor is [4Fe-4S] cluster.

Involved in iron-sulfur cluster biogenesis. Binds a 4Fe-4S cluster, can transfer this cluster to apoproteins, and thereby intervenes in the maturation of Fe/S proteins. Could also act as a scaffold/chaperone for damaged Fe/S proteins. In Acinetobacter baumannii (strain AB307-0294), this protein is Fe/S biogenesis protein NfuA.